The sequence spans 106 residues: YcgL domain-containing protein PsycPRwf_1721 (106 aa).

Residues 1–94 form the YcgL domain; sequence MHCDIYKFPK…PSDVLLAQAQ (94 aa).

The protein is YcgL domain-containing protein PsycPRwf_1721 of Psychrobacter sp. (strain PRwf-1).